The chain runs to 357 residues: MTTLKNDRFLRALLREPVDTTPIWMMRQAGRYLPEYRETRSKAGDFLSLCKNTEFACEVTLQPLRRYDLDAAILFSDILTIPDALGLGLYFETGEGPKFHKTVRTEQDVANLPKLNAKADLDYVMNAVSTIRSALGGQVPLIGFSGSPWTLATYMVEGGSSKEFRFTKQMMYAQPEVLHALLDHLADSVIDYLNAQIDAGAQAIQIFDSWGGALAHREYVEFSLNYMNKIIAGLQREKDGRRIPVIVFTKGGGQWLEPMITTGADALGLDWTTPLNTARNVVSGRVALQGNLDPAVLYGSAASIEKAVKAMLDDAYANGEKTGYVANLGHGITQWVDPAQPKIFVDTVHEYSAKYLG.

Substrate is bound by residues 27–31 (RQAGR), Asp77, Tyr154, Ser209, and His330.

It belongs to the uroporphyrinogen decarboxylase family. As to quaternary structure, homodimer.

It is found in the cytoplasm. The enzyme catalyses uroporphyrinogen III + 4 H(+) = coproporphyrinogen III + 4 CO2. The protein operates within porphyrin-containing compound metabolism; protoporphyrin-IX biosynthesis; coproporphyrinogen-III from 5-aminolevulinate: step 4/4. Catalyzes the decarboxylation of four acetate groups of uroporphyrinogen-III to yield coproporphyrinogen-III. The chain is Uroporphyrinogen decarboxylase from Acinetobacter baumannii (strain SDF).